Consider the following 251-residue polypeptide: Probable phosphatase Sputcn32_1369 (251 aa).

Zn(2+)-binding residues include His8, His10, His16, His41, Glu74, His102, His132, Asp193, and His195.

Belongs to the PHP family. The cofactor is Zn(2+).

The chain is Probable phosphatase Sputcn32_1369 from Shewanella putrefaciens (strain CN-32 / ATCC BAA-453).